The chain runs to 63 residues: UPF0434 protein Mmar10_2939 (63 aa).

The protein belongs to the UPF0434 family.

The chain is UPF0434 protein Mmar10_2939 from Maricaulis maris (strain MCS10) (Caulobacter maris).